The following is a 493-amino-acid chain: Serine/threonine-protein kinase 3 (493 aa).

In terms of domain architecture, Protein kinase spans 26–277 (FDVLEKLGEG…ATQLLQHPFI (252 aa)). Residues 32 to 40 (LGEGSYGSV) and K55 each bind ATP. The active-site Proton acceptor is D145. The residue at position 179 (T179) is a Phosphothreonine; by autocatalysis. Residues 286 to 327 (LRDLITEAMDIKAKRHEELQRELEEEDENSEEDELDSHTMVK) adopt a coiled-coil conformation. Disordered regions lie at residues 303 to 336 (ELQRELEEEDENSEEDELDSHTMVKTNSESAGTM) and 369 to 414 (DDEE…NCNQ). Residues 308–320 (LEEEDENSEEDEL) are compositionally biased toward acidic residues. A compositionally biased stretch (polar residues) spans 325–336 (MVKTNSESAGTM). The span at 369–378 (DDEEEEEEED) shows a compositional bias: acidic residues. A compositionally biased stretch (basic and acidic residues) spans 398 to 410 (YFDKQDSKNKPHD). The region spanning 439–486 (FDFLKNLSFEELQMRLKALDPMMEREIEDLRQRYNAKRQPILDAMDAK) is the SARAH domain. The stretch at 444–477 (NLSFEELQMRLKALDPMMEREIEDLRQRYNAKRQ) forms a coiled coil.

It belongs to the protein kinase superfamily. STE Ser/Thr protein kinase family. STE20 subfamily. As to quaternary structure, homodimer; mediated via the coiled-coil region. Requires Mg(2+) as cofactor.

Its subcellular location is the cytoplasm. It localises to the nucleus. It catalyses the reaction L-seryl-[protein] + ATP = O-phospho-L-seryl-[protein] + ADP + H(+). The enzyme catalyses L-threonyl-[protein] + ATP = O-phospho-L-threonyl-[protein] + ADP + H(+). With respect to regulation, inhibited by the C-terminal non-catalytic region. Activated by caspase-cleavage. Full activation also requires homodimerization and autophosphorylation of Thr-179. Stress-activated, pro-apoptotic kinase which, following caspase-cleavage, enters the nucleus and induces chromatin condensation followed by internucleosomal DNA fragmentation. Key component of the Hippo signaling pathway which plays a pivotal role in organ size control and tumor suppression by restricting proliferation and promoting apoptosis. The core of this pathway is composed of a kinase cascade wherein stk3/mst2 and stk4/mst1, in complex with its regulatory protein sav1, phosphorylates and activates lats1/2 in complex with its regulatory protein mob1, which in turn phosphorylates and inactivates yap1 oncoprotein and wwtr1/taz. Phosphorylation of yap1 by lats2 inhibits its translocation into the nucleus to regulate cellular genes important for cell proliferation, cell death, and cell migration. The sequence is that of Serine/threonine-protein kinase 3 (stk3) from Xenopus laevis (African clawed frog).